A 278-amino-acid polypeptide reads, in one-letter code: Large ribosomal subunit protein uL2 (278 aa).

Disordered regions lie at residues 27–58 (STPE…GGGH) and 224–278 (VVMN…GKKR). Basic residues predominate over residues 37-58 (LHGKGGRNAHGRITTRHKGGGH). Positions 253-268 (PEGRTRKPNKPSDKLI) are enriched in basic and acidic residues. Over residues 269–278 (VRRRRTGKKR) the composition is skewed to basic residues.

Belongs to the universal ribosomal protein uL2 family. As to quaternary structure, part of the 50S ribosomal subunit. Forms a bridge to the 30S subunit in the 70S ribosome.

In terms of biological role, one of the primary rRNA binding proteins. Required for association of the 30S and 50S subunits to form the 70S ribosome, for tRNA binding and peptide bond formation. It has been suggested to have peptidyltransferase activity; this is somewhat controversial. Makes several contacts with the 16S rRNA in the 70S ribosome. This chain is Large ribosomal subunit protein uL2, found in Mycobacterium sp. (strain KMS).